Reading from the N-terminus, the 59-residue chain is Sperm protamine P1-type (59 aa).

The disordered stretch occupies residues 1 to 59; sequence MARYRRNRSRSRSRRRRRRRGGRGGRRGRRRRRHGQRRRGRRGRERTRRRRRRRRRSSS.

It belongs to the protamine P1 family. In terms of tissue distribution, testis.

It is found in the nucleus. The protein localises to the chromosome. Protamines substitute for histones in the chromatin of sperm during the haploid phase of spermatogenesis. They compact sperm DNA into a highly condensed, stable and inactive complex. This is Sperm protamine P1-type from Chrysemys picta bellii (Western painted turtle).